The chain runs to 72 residues: Sec-independent protein translocase protein TatA (72 aa).

The helical transmembrane segment at 1–21 threads the bilayer; that stretch reads MAGLSIWHVVIFAIVVILLFG. The interval 47-72 is disordered; the sequence is DEAASLNSPRTIDAQVKTSESTSVKS. Residues 51–72 show a composition bias toward polar residues; that stretch reads SLNSPRTIDAQVKTSESTSVKS.

It belongs to the TatA/E family. As to quaternary structure, the Tat system comprises two distinct complexes: a TatABC complex, containing multiple copies of TatA, TatB and TatC subunits, and a separate TatA complex, containing only TatA subunits. Substrates initially bind to the TatABC complex, which probably triggers association of the separate TatA complex to form the active translocon.

It localises to the cell inner membrane. Functionally, part of the twin-arginine translocation (Tat) system that transports large folded proteins containing a characteristic twin-arginine motif in their signal peptide across membranes. TatA could form the protein-conducting channel of the Tat system. The protein is Sec-independent protein translocase protein TatA of Acinetobacter baumannii (strain AB307-0294).